A 230-amino-acid polypeptide reads, in one-letter code: Cytidylate kinase (230 aa).

14–22 provides a ligand contact to ATP; the sequence is GPSGVGKSS.

This sequence belongs to the cytidylate kinase family. Type 1 subfamily.

It is found in the cytoplasm. It catalyses the reaction CMP + ATP = CDP + ADP. It carries out the reaction dCMP + ATP = dCDP + ADP. The protein is Cytidylate kinase of Buchnera aphidicola subsp. Baizongia pistaciae (strain Bp).